Consider the following 359-residue polypeptide: DNA polymerase IV (359 aa).

Positions Ile-4 to Gly-184 constitute a UmuC domain. The Mg(2+) site is built by Asp-8 and Asp-102. Residue Glu-103 is part of the active site.

The protein belongs to the DNA polymerase type-Y family. As to quaternary structure, monomer. Mg(2+) is required as a cofactor.

Its subcellular location is the cytoplasm. The enzyme catalyses DNA(n) + a 2'-deoxyribonucleoside 5'-triphosphate = DNA(n+1) + diphosphate. Its function is as follows. Poorly processive, error-prone DNA polymerase involved in untargeted mutagenesis. Copies undamaged DNA at stalled replication forks, which arise in vivo from mismatched or misaligned primer ends. These misaligned primers can be extended by PolIV. Exhibits no 3'-5' exonuclease (proofreading) activity. May be involved in translesional synthesis, in conjunction with the beta clamp from PolIII. In Xanthomonas axonopodis pv. citri (strain 306), this protein is DNA polymerase IV.